A 239-amino-acid chain; its full sequence is Ubiquinone biosynthesis O-methyltransferase (239 aa).

4 residues coordinate S-adenosyl-L-methionine: R44, G63, D84, and M128.

Belongs to the methyltransferase superfamily. UbiG/COQ3 family.

The enzyme catalyses a 3-demethylubiquinol + S-adenosyl-L-methionine = a ubiquinol + S-adenosyl-L-homocysteine + H(+). The catalysed reaction is a 3-(all-trans-polyprenyl)benzene-1,2-diol + S-adenosyl-L-methionine = a 2-methoxy-6-(all-trans-polyprenyl)phenol + S-adenosyl-L-homocysteine + H(+). The protein operates within cofactor biosynthesis; ubiquinone biosynthesis. Functionally, O-methyltransferase that catalyzes the 2 O-methylation steps in the ubiquinone biosynthetic pathway. This Xanthomonas oryzae pv. oryzae (strain MAFF 311018) protein is Ubiquinone biosynthesis O-methyltransferase.